The primary structure comprises 644 residues: Core protein VP4 (644 aa).

It belongs to the orbivirus VP4 family.

It localises to the virion. In terms of biological role, the VP4 protein is one of the five proteins (with VP1, VP3, VP6 and VP7) which form the inner capsid of the virus. This Bluetongue virus 13 (isolate USA) (BTV 13) protein is Core protein VP4 (Segment-4).